The chain runs to 334 residues: Biotin synthase (334 aa).

Residues 55–285 form the Radical SAM core domain; sequence GEGGGVHACS…AHPSKIIKFA (231 aa). [4Fe-4S] cluster is bound by residues Cys-73, Cys-77, and Cys-80. [2Fe-2S] cluster contacts are provided by Cys-152, Cys-213, and Lys-283.

It belongs to the radical SAM superfamily. Biotin synthase family. As to quaternary structure, homodimer. [4Fe-4S] cluster serves as cofactor. It depends on [2Fe-2S] cluster as a cofactor.

The enzyme catalyses (4R,5S)-dethiobiotin + (sulfur carrier)-SH + 2 reduced [2Fe-2S]-[ferredoxin] + 2 S-adenosyl-L-methionine = (sulfur carrier)-H + biotin + 2 5'-deoxyadenosine + 2 L-methionine + 2 oxidized [2Fe-2S]-[ferredoxin]. Its pathway is cofactor biosynthesis; biotin biosynthesis; biotin from 7,8-diaminononanoate: step 2/2. In terms of biological role, catalyzes the conversion of dethiobiotin (DTB) to biotin by the insertion of a sulfur atom into dethiobiotin via a radical-based mechanism. This Chlorobaculum parvum (strain DSM 263 / NCIMB 8327) (Chlorobium vibrioforme subsp. thiosulfatophilum) protein is Biotin synthase.